Reading from the N-terminus, the 409-residue chain is Peptidase T (409 aa).

H78 is a Zn(2+) binding site. D80 is a catalytic residue. D140 contributes to the Zn(2+) binding site. The Proton acceptor role is filled by E174. The Zn(2+) site is built by E175, D197, and H379.

This sequence belongs to the peptidase M20B family. Zn(2+) is required as a cofactor.

It is found in the cytoplasm. The catalysed reaction is Release of the N-terminal residue from a tripeptide.. Its function is as follows. Cleaves the N-terminal amino acid of tripeptides. The polypeptide is Peptidase T (Aliivibrio salmonicida (strain LFI1238) (Vibrio salmonicida (strain LFI1238))).